A 377-amino-acid polypeptide reads, in one-letter code: Geranylgeranyl transferase type-1 subunit beta (377 aa).

PFTB repeat units lie at residues 144–186 (KEAC…YMLN), 193–234 (MKKA…CLMG), 245–284 (LNRI…KLLK), and 291–333 (FEKN…SLME). Geranylgeranyl diphosphate is bound by residues 219–221 (HGG) and 263–266 (RPNK). Positions 269 and 271 each coordinate Zn(2+). Position 272-275 (272-275 (YSFW)) interacts with geranylgeranyl diphosphate. Histidine 321 contacts Zn(2+).

The protein belongs to the protein prenyltransferase subunit beta family. As to quaternary structure, heterodimer of FNTA and PGGT1B. PGGT1B mediates interaction with substrate peptides. Zn(2+) serves as cofactor. Mg(2+) is required as a cofactor.

The catalysed reaction is geranylgeranyl diphosphate + L-cysteinyl-[protein] = S-geranylgeranyl-L-cysteinyl-[protein] + diphosphate. In terms of biological role, catalyzes the transfer of a geranyl-geranyl moiety from geranyl-geranyl pyrophosphate to a cysteine at the fourth position from the C-terminus of proteins having the C-terminal sequence Cys-aliphatic-aliphatic-X. Known substrates include RAC1, RAC2, RAP1A and RAP1B. The chain is Geranylgeranyl transferase type-1 subunit beta (PGGT1B) from Bos taurus (Bovine).